A 647-amino-acid chain; its full sequence is Phosphatidylinositol polyphosphate 5-phosphatase type IV (647 aa).

Disordered stretches follow at residues 1–80 (MPSK…QPPI), 101–131 (RGSQ…PAYS), and 177–196 (HRDA…HASH). Copy 1 of the repeat occupies 52–55 (PMPP). A 3 X 4 AA repeats of P-X-X-P region spans residues 52-243 (PMPPFSIPAK…AHSNLGPSRP (192 aa)). The segment covering 60-75 (AKTSNQNPQTKANLIT) has biased composition (polar residues). Residues 76–79 (PQPP) form repeat 2. Ser103 carries the post-translational modification Phosphoserine. The span at 120–129 (LQDSVAQSPA) shows a compositional bias: polar residues. Thr197 is subject to Phosphothreonine. Residues 240–243 (PSRP) form repeat 3. Phosphoserine is present on residues Ser245 and Ser259. Position 644 is a cysteine methyl ester (Cys644). The S-farnesyl cysteine moiety is linked to residue Cys644. A propeptide spans 645–647 (TVS) (removed in mature form).

The protein belongs to the inositol polyphosphate 5-phosphatase family. In terms of assembly, interacts (when prenylated) with PDE6D; this is important for normal location in cilia. As to expression, highly expressed in testis, in pachytene and diplotene spermatocytes, but not in more mature elongating spermatids. Detected in neurons throughout the brain.

Its subcellular location is the cytoplasm. It is found in the cytoskeleton. The protein resides in the cilium axoneme. The protein localises to the golgi apparatus. It localises to the golgi stack membrane. Its subcellular location is the cell projection. It is found in the ruffle. The protein resides in the cell membrane. The protein localises to the nucleus. The enzyme catalyses a 1,2-diacyl-sn-glycero-3-phospho-(1D-myo-inositol-4,5-bisphosphate) + H2O = a 1,2-diacyl-sn-glycero-3-phospho-(1D-myo-inositol 4-phosphate) + phosphate. The catalysed reaction is a 1,2-diacyl-sn-glycero-3-phospho-(1D-myo-inositol-3,4,5-trisphosphate) + H2O = a 1,2-diacyl-sn-glycero-3-phospho-(1D-myo-inositol-3,4-bisphosphate) + phosphate. It carries out the reaction a 1,2-diacyl-sn-glycero-3-phospho-(1D-myo-inositol-3,5-bisphosphate) + H2O = a 1,2-diacyl-sn-glycero-3-phospho-(1D-myo-inositol-3-phosphate) + phosphate. In terms of biological role, phosphatidylinositol (PtdIns) phosphatase that specifically hydrolyzes the 5-phosphate of phosphatidylinositol-3,4,5-trisphosphate (PtdIns(3,4,5)P3), phosphatidylinositol 4,5-bisphosphate (PtdIns(4,5)P2) and phosphatidylinositol 3,5-bisphosphate (PtdIns(3,5)P2). Specific for lipid substrates, inactive towards water soluble inositol phosphates. Specific for lipid substrates, inactive towards water soluble inositol phosphates. Plays an essential role in the primary cilium by controlling ciliary growth and phosphoinositide 3-kinase (PI3K) signaling and stability. The protein is Phosphatidylinositol polyphosphate 5-phosphatase type IV (Inpp5e) of Mus musculus (Mouse).